Reading from the N-terminus, the 164-residue chain is Reticulon-like protein B22 (164 aa).

The 164-residue stretch at 1–164 (MGEMGKAMGL…ILEQEAHSDT (164 aa)) folds into the Reticulon domain. A run of 2 helical transmembrane segments spans residues 30–50 (SLFSDVFIVLLCSLAILGLLF) and 117–137 (LISGVTVAYAGLCLFCLSMLC).

Its subcellular location is the endoplasmic reticulum membrane. In Arabidopsis thaliana (Mouse-ear cress), this protein is Reticulon-like protein B22 (RTNLB22).